The sequence spans 312 residues: tRNA dimethylallyltransferase (312 aa).

13–20 is an ATP binding site; it reads GPTAAGKT. Residue 15-20 coordinates substrate; sequence TAAGKT. 3 interaction with substrate tRNA regions span residues 38-41, 162-166, and 244-249; these read DSAM, QRLLR, and RCVGYR.

The protein belongs to the IPP transferase family. As to quaternary structure, monomer. Requires Mg(2+) as cofactor.

It catalyses the reaction adenosine(37) in tRNA + dimethylallyl diphosphate = N(6)-dimethylallyladenosine(37) in tRNA + diphosphate. In terms of biological role, catalyzes the transfer of a dimethylallyl group onto the adenine at position 37 in tRNAs that read codons beginning with uridine, leading to the formation of N6-(dimethylallyl)adenosine (i(6)A). The polypeptide is tRNA dimethylallyltransferase (Chromohalobacter salexigens (strain ATCC BAA-138 / DSM 3043 / CIP 106854 / NCIMB 13768 / 1H11)).